Consider the following 294-residue polypeptide: rRNA 2'-O-methyltransferase fibrillarin (294 aa).

The tract at residues 1-62 (MGKDFKSGGG…GKFGAKGPRG (62 aa)) is disordered. The span at 20–56 (GPGGPGGRPFNKGPGGPGGPGGKFGGGRPGGPGGKFG) shows a compositional bias: gly residues. Arg-27, Arg-47, and Arg-61 each carry asymmetric dimethylarginine. S-adenosyl-L-methionine-binding positions include 151–152 (TT), 170–171 (EF), 195–196 (DA), and 215–218 (DVAQ).

This sequence belongs to the methyltransferase superfamily. Fibrillarin family. Component of box C/D small nucleolar ribonucleoprotein (snoRNP) particles. It is associated with the U3, U8 and U13 small nuclear RNAs. Post-translationally, by homology to other fibrillarins, some or all of the N-terminal domain arginines are modified to asymmetric dimethylarginine (DMA).

The protein localises to the nucleus. It localises to the nucleolus. It catalyses the reaction L-glutaminyl-[histone H2A] + S-adenosyl-L-methionine = N(5)-methyl-L-glutaminyl-[histone H2A] + S-adenosyl-L-homocysteine + H(+). Its function is as follows. S-adenosyl-L-methionine-dependent methyltransferase that has the ability to methylate both RNAs and proteins. Involved in pre-rRNA processing. Utilizes the methyl donor S-adenosyl-L-methionine to catalyze the site-specific 2'-hydroxyl methylation of ribose moieties in pre-ribosomal RNA. Site specificity is provided by a guide RNA that base pairs with the substrate. Methylation occurs at a characteristic distance from the sequence involved in base pairing with the guide RNA. Also acts as a protein methyltransferase by mediating methylation of 'Gln-105' of histone H2A (H2AQ105me), a modification that impairs binding of the FACT complex and is specifically present at 35S ribosomal DNA locus. This chain is rRNA 2'-O-methyltransferase fibrillarin (FIB), found in Tetrahymena thermophila.